We begin with the raw amino-acid sequence, 830 residues long: Ribosome biogenesis protein ERB1 (830 aa).

Residues 1-142 are disordered; the sequence is MAPQPLKVGT…NKDLPVDEKL (142 aa). Composition is skewed to acidic residues over residues 35 to 44 and 52 to 109; these read VSEESDEEFG and MSDD…DSDS. The span at 131 to 142 shows a compositional bias: basic and acidic residues; sequence EENKDLPVDEKL. WD repeat units lie at residues 481 to 520, 523 to 563, 660 to 698, 701 to 740, 744 to 783, and 799 to 830; these read PGDT…EVWR, LHAG…APHI, KTPG…LIRT, SGVK…KPYK, YHNR…DLMQ, and IDGI…LWCS.

This sequence belongs to the WD repeat BOP1/ERB1 family. As to quaternary structure, component of the NOP7 complex, composed of ERB1, NOP7 and YTM1. The complex is held together by ERB1, which interacts with NOP7 via its N-terminal domain and with YTM1 via a high-affinity interaction between the seven-bladed beta-propeller domains of the 2 proteins. The NOP7 complex associates with the 66S pre-ribosome.

The protein localises to the nucleus. The protein resides in the nucleolus. It localises to the nucleoplasm. Its function is as follows. Component of the NOP7 complex, which is required for maturation of the 25S and 5.8S ribosomal RNAs and formation of the 60S ribosome. The protein is Ribosome biogenesis protein ERB1 of Cryptococcus neoformans var. neoformans serotype D (strain JEC21 / ATCC MYA-565) (Filobasidiella neoformans).